The following is a 1027-amino-acid chain: C2 and GRAM domain-containing protein At5g50170 (1027 aa).

A C2 1 domain is found at 1–103 (MRLYVYILQA…ENQTLLPTWF (103 aa)). Residues 158–167 (SPKDLISSRD) show a composition bias toward basic and acidic residues. 2 disordered regions span residues 158–177 (SPKD…HDGK) and 201–223 (LHDE…DQCS). The segment covering 168–177 (GKRRKHHDGK) has biased composition (basic residues). Over residues 206–223 (SVGQSVNSNYEDATDQCS) the composition is skewed to polar residues. The 174-residue stretch at 253 to 426 (TGGVLVDQKY…LLAKTYKTLD (174 aa)) folds into the VASt 1 domain. A helical membrane pass occupies residues 452-472 (FLYFWSSSVICAVLLSVYVVV). Residues 516-639 (TVHFVQARLH…TADELADLSV (124 aa)) form the C2 2 domain. A GRAM domain is found at 693 to 756 (AFQKLFGLPH…LWEDIDDIQV (64 aa)). The region spanning 855 to 1018 (MMSKVYTCDL…VIFDLFQKES (164 aa)) is the VASt 2 domain.

The protein localises to the membrane. This is C2 and GRAM domain-containing protein At5g50170 from Arabidopsis thaliana (Mouse-ear cress).